The sequence spans 739 residues: MATDDSIIVLDDDDEDEAAAQPGPSNLPPNPASTGPGPGLSQQATGLSEPRVDGGSSNSGSRKCYKLDNEKLFEEFLELCKTETSDHPEVVPFLHKLQQRAQSVFLASAEFCNILSRVLARSRKRPAKIYVYINELCTVLKAHSIKKKLNLAPAASTTSEASGPNPPTEPPSDLTNTENTASEASRTRGSRRQIQRLEQLLALYVAEIRRLQEKELDLSELDDPDSSYLQEARLKRKLIRLFGRLCELKDCSSLTGRVIEQRIPYRGTRYPEVNRRIERLINKPGLDTFPDYGDVLRAVEKAATRHSLGLPRQQLQLLAQDAFRDVGVRLQERRHLDLIYNFGCHLTDDYRPGVDPALSDPTLARRLRENRTLAMNRLDEVISKYAMMQDKTEEGERQKRRARLLGTAPQPSDPPQASSESGEGPSGMASQECPTTSKAETDDDDDDDDDDDEDNEESEEEEEEEEEEKEATEDEDEDLEQLQEDQGGDEEEEGGDNEGNESPTSPSDFFHRRNSEPAEGLRTPEGQQKRGLTETPASPPGASLDPPSTDAESSGEQLLEPLLGDESPVSQLAELEMEALPEERDISSPRKKSEDSLPTILENGAAVVTSTSVNGRVSSHTWRDASPPSKRFRKEKKQLGSGLLGNSYIKEPMAQQDSGQNTSVQPMPSPPLASVASVADSSTRVDSPSHELVTSSLCSPSPSLLLQTPQAQSLRQCIYKTSVATQCDPEEIIVLSDSD.

Residues methionine 1–glycine 60 form a disordered region. A necessary for interaction with USP7 and ATRX region spans residues methionine 1 to proline 166. Serine 25 bears the Phosphoserine mark. Residue lysine 148 forms a Glycyl lysine isopeptide (Lys-Gly) (interchain with G-Cter in SUMO2) linkage. The tract at residues alanine 155–arginine 191 is disordered. Residues aspartate 173–alanine 184 are compositionally biased toward polar residues. 2 coiled-coil regions span residues serine 185–aspartate 223 and alanine 364–arginine 403. Residues glycine 189–glutamate 423 form an interaction with histone H3.3 region. Serine 219 is subject to Phosphoserine. Residues glycine 353 to glutamate 576 form a necessary for interaction with USP7 region. Residues lysine 391–glycine 395 carry the Nuclear localization signal motif. Disordered regions lie at residues leucine 405–threonine 599 and threonine 611–proline 688. Serine 418 and serine 430 each carry phosphoserine. Positions threonine 441–glycine 499 are enriched in acidic residues. Residues aspartate 445–glycine 488 adopt a coiled-coil conformation. Threonine 472 carries the post-translational modification Phosphothreonine. Serine 502, serine 505, serine 507, and serine 515 each carry phosphoserine. Threonine 523 carries the phosphothreonine modification. Residues serine 543 and serine 567 each carry the phosphoserine modification. Positions proline 581 to aspartate 595 are enriched in basic and acidic residues. The span at threonine 611–histidine 620 shows a compositional bias: polar residues. Positions tryptophan 622–proline 628 match the Nuclear localization signal motif. Residue serine 626 is modified to Phosphoserine. Residues serine 626 to aspartate 739 are interaction with SPOP. Residue lysine 630 forms a Glycyl lysine isopeptide (Lys-Gly) (interchain with G-Cter in SUMO1) linkage. Residues glutamine 655–proline 666 show a composition bias toward polar residues. A Phosphoserine; by HIPK1 modification is found at serine 669. Serine 687, serine 701, serine 736, and serine 738 each carry phosphoserine. The segment at isoleucine 732–aspartate 739 is sumo interaction motif (SIM).

This sequence belongs to the DAXX family. As to quaternary structure, homomultimer. Interacts (via C-terminus) with TNFRSF6 (via death domain). Interacts with PAX5, SLC2A4/GLUT4, MAP3K5, TGFBR2, phosphorylated dimeric HSPB1/HSP27, CENPC, ETS1, sumoylated PML, UBE2I, MCRS1 and TP53. Interacts (via N-terminus) with HIPK2 and HIPK3. Interacts with HIPK1, which induces translocation from PML/POD/ND10 nuclear bodies to chromatin and enhances association with HDAC1. Interacts (non-phosphorylated) with PAX3, PAX7, DEK, HDAC1, HDAC2, HDAC3, acetylated histone H4 and histones H2A, H2B, H3, H3.3 and H4. Interacts with SPOP; mediating CUL3-dependent proteasomal degradation. Interacts with CBP; the interaction is dependent the sumoylation of CBP and suppresses CBP transcriptional activity via recruitment of HDAC2 directly in the complex with TP53 and HIPK2. Interacts with AXIN1; the interaction stimulates the interaction of DAXX with TP53, stimulates 'Ser-46' phosphorylation of TP53 on and induces cell death on UV irradiation. Interacts with MDM2; the interaction is direct. Interacts with USP7; the interaction is direct and independent of MDM2 and TP53. Part of a complex with DAXX, MDM2 and USP7 under non-stress conditions. Interacts (via N-terminus) with RASSF1 (via C-terminus); the interaction is independent of MDM2 and TP53; RASSF1 isoform A disrupts interactions among MDM2, DAXX and USP7, thus contributing to the efficient activation of TP53 by promoting MDM2 self-ubiquitination in cell-cycle checkpoint control in response to DNA damage. Interacts with ATRX to form the chromatin remodeling complex ATRX:DAXX. Interacts with HSF1 (via homotrimeric form preferentially); this interaction relieves homotrimeric HSF1 from repression of its transcriptional activity by HSP90-dependent multichaperone complex upon heat shock. Post-translationally, sumoylated with SUMO1 on multiple lysine residues. In terms of processing, repressor activity is down-regulated upon Ser-669 phosphorylation. Upon neuronal activation dephosphorylated by calcineurin in a Ca2+ dependent manner at Ser-669; dephosphorylation positively affects histone H3.3 loading and transcriptional activation. Polyubiquitinated; which is promoted by CUL3 and SPOP and results in proteasomal degradation. Ubiquitinated by MDM2; inducing its degradation. Deubiquitinated by USP7; leading to stabilize it.

It localises to the cytoplasm. It is found in the nucleus. Its subcellular location is the nucleoplasm. The protein localises to the PML body. The protein resides in the nucleolus. It localises to the chromosome. It is found in the centromere. Transcription corepressor known to repress transcriptional potential of several sumoylated transcription factors. Down-regulates basal and activated transcription. Its transcription repressor activity is modulated by recruiting it to subnuclear compartments like the nucleolus or PML/POD/ND10 nuclear bodies through interactions with MCSR1 and PML, respectively. Seems to regulate transcription in PML/POD/ND10 nuclear bodies together with PML and may influence TNFRSF6-dependent apoptosis thereby. Inhibits transcriptional activation of PAX3 and ETS1 through direct protein-protein interactions. Modulates PAX5 activity; the function seems to involve CREBBP. Acts as an adapter protein in a MDM2-DAXX-USP7 complex by regulating the RING-finger E3 ligase MDM2 ubiquitination activity. Under non-stress condition, in association with the deubiquitinating USP7, prevents MDM2 self-ubiquitination and enhances the intrinsic E3 ligase activity of MDM2 towards TP53, thereby promoting TP53 ubiquitination and subsequent proteasomal degradation. Upon DNA damage, its association with MDM2 and USP7 is disrupted, resulting in increased MDM2 autoubiquitination and consequently, MDM2 degradation, which leads to TP53 stabilization. Acts as a histone chaperone that facilitates deposition of histone H3.3. Acts as a targeting component of the chromatin remodeling complex ATRX:DAXX which has ATP-dependent DNA translocase activity and catalyzes the replication-independent deposition of histone H3.3 in pericentric DNA repeats outside S-phase and telomeres, and the in vitro remodeling of H3.3-containing nucleosomes. Does not affect the ATPase activity of ATRX but alleviates its transcription repression activity. Upon neuronal activation associates with regulatory elements of selected immediate early genes where it promotes deposition of histone H3.3 which may be linked to transcriptional induction of these genes. Required for the recruitment of histone H3.3:H4 dimers to PML-nuclear bodies (PML-NBs); the process is independent of ATRX and facilitated by ASF1A; PML-NBs are suggested to function as regulatory sites for the incorporation of newly synthesized histone H3.3 into chromatin. Proposed to mediate activation of the JNK pathway and apoptosis via MAP3K5 in response to signaling from TNFRSF6 and TGFBR2. Interaction with HSPB1/HSP27 may prevent interaction with TNFRSF6 and MAP3K5 and block DAXX-mediated apoptosis. In contrast, in lymphoid cells JNC activation and TNFRSF6-mediated apoptosis may not involve DAXX. Plays a role as a positive regulator of the heat shock transcription factor HSF1 activity during the stress protein response. The protein is Death domain-associated protein 6 (Daxx) of Mus musculus (Mouse).